The sequence spans 534 residues: O-phosphoserine--tRNA(Cys) ligase (534 aa).

Substrate contacts are provided by residues 186–188, 231–233, 273–274, and Asn-325; these read HMT, SAS, and YY.

The protein belongs to the class-II aminoacyl-tRNA synthetase family. O-phosphoseryl-tRNA(Cys) synthetase subfamily. In terms of assembly, homotetramer. Interacts with SepCysS.

The enzyme catalyses tRNA(Cys) + O-phospho-L-serine + ATP = O-phospho-L-seryl-tRNA(Cys) + AMP + diphosphate. Catalyzes the attachment of O-phosphoserine (Sep) to tRNA(Cys). This is O-phosphoserine--tRNA(Cys) ligase (sepS) from Archaeoglobus fulgidus (strain ATCC 49558 / DSM 4304 / JCM 9628 / NBRC 100126 / VC-16).